The primary structure comprises 122 residues: Large ribosomal subunit protein bL17 (122 aa).

Belongs to the bacterial ribosomal protein bL17 family. As to quaternary structure, part of the 50S ribosomal subunit. Contacts protein L32.

This Staphylococcus epidermidis (strain ATCC 35984 / DSM 28319 / BCRC 17069 / CCUG 31568 / BM 3577 / RP62A) protein is Large ribosomal subunit protein bL17.